Here is a 780-residue protein sequence, read N- to C-terminus: ATP-dependent 6-phosphofructokinase, liver type (780 aa).

Ala2 bears the N-acetylalanine mark. Residues 2–390 form an N-terminal catalytic PFK domain 1 region; the sequence is ATVDLEKLRM…NWKIYKLLAH (389 aa). ATP is bound by residues Gly25, 88 to 89, and 118 to 121; these read RC and GDGS. Residue Asp119 participates in Mg(2+) binding. Substrate contacts are provided by residues 164–166, Arg201, 208–210, Glu264, Arg292, and 298–301; these read SID, MGR, and HVQR. Residue Asp166 is the Proton acceptor of the active site. Ser377 is modified (phosphoserine). Positions 391-400 are interdomain linker; sequence QKVSKEKSNF. The tract at residues 401 to 780 is C-terminal regulatory PFK domain 2; sequence SLAILNVGAP…RRTLSIDKGF (380 aa). Residues Arg470, 527–531, Arg565, 572–574, and Glu628 contribute to the beta-D-fructose 2,6-bisphosphate site; these read TISNN and MGG. O-linked (GlcNAc) serine glycosylation is present at Ser529. Residue Tyr640 is modified to Phosphotyrosine. Beta-D-fructose 2,6-bisphosphate-binding positions include Arg654, 660 to 663, and Arg734; that span reads HLQQ. The residue at position 775 (Ser775) is a Phosphoserine.

This sequence belongs to the phosphofructokinase type A (PFKA) family. ATP-dependent PFK group I subfamily. Eukaryotic two domain clade 'E' sub-subfamily. In terms of assembly, homo- and heterotetramers. Phosphofructokinase (PFK) enzyme functions as a tetramer composed of different combinations of 3 types of subunits, called PFKM (M), PFKL (L) and PFKP (P). The composition of the PFK tetramer differs according to the tissue type it is present in. The kinetic and regulatory properties of the tetrameric enzyme are dependent on the subunit composition, hence can vary across tissues. The cofactor is Mg(2+). In terms of processing, glcNAcylation at Ser-529 by OGT decreases enzyme activity, leading to redirect glucose flux through the oxidative pentose phosphate pathway. Glycosylation is stimulated by both hypoxia and glucose deprivation.

It localises to the cytoplasm. The catalysed reaction is beta-D-fructose 6-phosphate + ATP = beta-D-fructose 1,6-bisphosphate + ADP + H(+). Its pathway is carbohydrate degradation; glycolysis; D-glyceraldehyde 3-phosphate and glycerone phosphate from D-glucose: step 3/4. Allosterically activated by ADP, AMP, or fructose 2,6-bisphosphate, and allosterically inhibited by ATP or citrate. GlcNAcylation by OGT overcomes allosteric regulation. Catalyzes the phosphorylation of D-fructose 6-phosphate to fructose 1,6-bisphosphate by ATP, the first committing step of glycolysis. Negatively regulates the phagocyte oxidative burst in response to bacterial infection by controlling cellular NADPH biosynthesis and NADPH oxidase-derived reactive oxygen species. Upon macrophage activation, drives the metabolic switch toward glycolysis, thus preventing glucose turnover that produces NADPH via pentose phosphate pathway. In Rattus norvegicus (Rat), this protein is ATP-dependent 6-phosphofructokinase, liver type (Pfkl).